We begin with the raw amino-acid sequence, 72 residues long: Neuropeptide IMFamide (72 aa).

Residues 1–24 (MMRFTIGVVCLVAVLLSLAEVSEA) form the signal peptide. F36 is subject to Phenylalanine amide. A propeptide spanning residues 40–72 (GPTEYDQRGKTFTALCEIATEACQAWFPSTENK) is cleaved from the precursor.

Expressed in corpora cardiaca (CC), corpora allata (CA), antennal lobe (AL) and gnathal ganglion (GNG) (at protein level). Expression detected in only a few animals (at protein level).

The protein resides in the secreted. This Agrotis ipsilon (Black cutworm moth) protein is Neuropeptide IMFamide.